A 276-amino-acid chain; its full sequence is Large ribosomal subunit protein uL2 (276 aa).

The tract at residues 223–276 (GVAMNPVDHPHGGGEGRGKGHHPTSPWGLPTKGYKTRRGKRPSDKFIVRRRNEV) is disordered. Composition is skewed to basic and acidic residues over residues 230–240 (DHPHGGGEGRG) and 263–276 (RPSD…RNEV).

The protein belongs to the universal ribosomal protein uL2 family. Part of the 50S ribosomal subunit. Forms a bridge to the 30S subunit in the 70S ribosome.

In terms of biological role, one of the primary rRNA binding proteins. Required for association of the 30S and 50S subunits to form the 70S ribosome, for tRNA binding and peptide bond formation. It has been suggested to have peptidyltransferase activity; this is somewhat controversial. Makes several contacts with the 16S rRNA in the 70S ribosome. In Thermotoga maritima (strain ATCC 43589 / DSM 3109 / JCM 10099 / NBRC 100826 / MSB8), this protein is Large ribosomal subunit protein uL2.